Reading from the N-terminus, the 268-residue chain is Hydroxypyruvate/pyruvate aldolase (268 aa).

Histidine 48 serves as the catalytic Proton acceptor. Residues glutamate 152 and aspartate 178 each contribute to the a divalent metal cation site.

Belongs to the HpcH/HpaI aldolase family. It depends on Mn(2+) as a cofactor. Mg(2+) is required as a cofactor. The cofactor is Co(2+).

The catalysed reaction is D-glyceraldehyde + 3-hydroxypyruvate = (3R,4S,5R)-3,4,5,6-tetrahydroxy-2-oxohexanoate. It carries out the reaction D-glyceraldehyde + 3-hydroxypyruvate = 2-dehydro-D-gluconate. It catalyses the reaction D-glyceraldehyde + 3-hydroxypyruvate = 2-dehydro-D-galactonate. The enzyme catalyses D-glyceraldehyde + pyruvate = 2-dehydro-3-deoxy-L-galactonate. The catalysed reaction is 2-dehydro-3-deoxy-D-gluconate = D-glyceraldehyde + pyruvate. In terms of biological role, aldolase which can catalyze in vitro the aldolisation reaction between hydroxypyruvate (HPA) or pyruvate (PA) and D-glyceraldehyde (D-GA). The condensation of hydroxypyruvate and D-glyceraldehyde produces (3R,4S,5R)-3,4,5,6-tetrahydroxy-2-oxohexanoate as the major product, 2-dehydro-D-gluconate and 2-dehydro-D-galactonate. The condensation of pyruvate and D-glyceraldehyde produces 2-dehydro-3-deoxy-L-galactonate as the major product and 2-dehydro-3-deoxy-D-gluconate. Also catalyzes the retro-aldol type decarboxylation of oxaloacetate, a general property of known pyruvate aldolases. The chain is Hydroxypyruvate/pyruvate aldolase from Pseudomonas aeruginosa.